Here is a 477-residue protein sequence, read N- to C-terminus: Acylamidase (477 aa).

Residues Lys-82 and Ser-157 each act as charge relay system in the active site. The active-site Acyl-ester intermediate is the Ser-181.

Belongs to the amidase family.

It carries out the reaction a monocarboxylic acid amide + H2O = a monocarboxylate + NH4(+). The catalysed reaction is an anilide + H2O = aniline + a carboxylate + H(+). The enzyme catalyses an N-acyl-L-amino acid + H2O = an L-alpha-amino acid + a carboxylate. It catalyses the reaction an N-acetyl-L-cysteine-S-conjugate + H2O = an S-substituted L-cysteine + acetate. Amidase activity is completely suppressed by inhibitors of serine proteases (phenylmethylsulfonyl fluoride and diisopropyl fluorophosphate), partially inhibited by copper and mercury ions, but is not affected by inhibitors of aliphatic amidases (acetaldehyde and nitrophenyl disulfides) or by EDTA. Its function is as follows. Amidase with broad substrate specificity, catalyzing the hydrolysis of a wide range of N-substituted amides, and, to a lesser extent, the hydrolysis of non-substituted amides. Acid para-nitroanilides (4'-nitroacetanilide, Gly-pNA, Ala-pNA, Leu-pNA) are the best substrates for this enzyme. N-substituted acrylamides (isopropyl acrylamide, N,N-dimethyl-aminopropyl acrylamide, and methylene-bis-acrylamide), N-acetyl derivatives of glycine, alanine and leucine, and aliphatic amides (acetamide, acrylamide, isobutyramide, n-butyramide, and valeramide) can also be used as substrates but with less efficiency. In Rhodococcus erythropolis (Arthrobacter picolinophilus), this protein is Acylamidase.